The primary structure comprises 66 residues: uncharacterized protein (66 aa).

Residues 11–31 (PFPLLGVWIIVIIIVAVIGLL) traverse the membrane as a helical segment.

Its subcellular location is the membrane. This is an uncharacterized protein from Chenopodium amaranticolor (Quinoa).